Reading from the N-terminus, the 292-residue chain is 2-(5''-triphosphoribosyl)-3'-dephosphocoenzyme-A synthase (292 aa).

It belongs to the CitG/MdcB family.

The enzyme catalyses 3'-dephospho-CoA + ATP = 2'-(5''-triphospho-alpha-D-ribosyl)-3'-dephospho-CoA + adenine. Its function is as follows. Catalyzes the formation of 2-(5''-triphosphoribosyl)-3'-dephosphocoenzyme-A, the precursor of the prosthetic group of the holo-acyl carrier protein (gamma chain) of citrate lyase, from ATP and dephospho-CoA. The chain is 2-(5''-triphosphoribosyl)-3'-dephosphocoenzyme-A synthase from Escherichia coli O127:H6 (strain E2348/69 / EPEC).